Here is a 98-residue protein sequence, read N- to C-terminus: Flagellar hook-basal body complex protein FliE (98 aa).

The tract at residues 22–56 (KTDNATGAGNTFTQMLDSMSDTQSNAQTSVSNLLT) is disordered. Over residues 23–56 (TDNATGAGNTFTQMLDSMSDTQSNAQTSVSNLLT) the composition is skewed to polar residues.

Belongs to the FliE family.

It localises to the bacterial flagellum basal body. This is Flagellar hook-basal body complex protein FliE from Listeria innocua serovar 6a (strain ATCC BAA-680 / CLIP 11262).